Reading from the N-terminus, the 276-residue chain is Sulfur carrier protein FdhD (276 aa).

The Cysteine persulfide intermediate role is filled by Cys-120.

This sequence belongs to the FdhD family.

Its subcellular location is the cytoplasm. Functionally, required for formate dehydrogenase (FDH) activity. Acts as a sulfur carrier protein that transfers sulfur from IscS to the molybdenum cofactor prior to its insertion into FDH. This is Sulfur carrier protein FdhD from Bordetella bronchiseptica (strain ATCC BAA-588 / NCTC 13252 / RB50) (Alcaligenes bronchisepticus).